Reading from the N-terminus, the 367-residue chain is Germination protease (367 aa).

The propeptide occupies 1 to 15; that stretch reads MKEPLDLSKYSVRTD.

This sequence belongs to the peptidase A25 family. In terms of assembly, homotetramer. Post-translationally, autoproteolytically processed. The inactive tetrameric zymogen termed p46 autoprocesses to a smaller form termed p41, which is active only during spore germination.

The catalysed reaction is Endopeptidase action with P4 Glu or Asp, P1 preferably Glu &gt; Asp, P1' hydrophobic and P2' Ala.. Functionally, initiates the rapid degradation of small, acid-soluble proteins during spore germination. The sequence is that of Germination protease from Bacillus cereus (strain ATCC 10987 / NRS 248).